The sequence spans 290 residues: ATP synthase gamma chain (290 aa).

It belongs to the ATPase gamma chain family. In terms of assembly, F-type ATPases have 2 components, CF(1) - the catalytic core - and CF(0) - the membrane proton channel. CF(1) has five subunits: alpha(3), beta(3), gamma(1), delta(1), epsilon(1). CF(0) has four main subunits: a, b, b' and c.

Its subcellular location is the cellular chromatophore membrane. Produces ATP from ADP in the presence of a proton gradient across the membrane. The gamma chain is believed to be important in regulating ATPase activity and the flow of protons through the CF(0) complex. The chain is ATP synthase gamma chain from Rhodobacter capsulatus (Rhodopseudomonas capsulata).